Here is a 102-residue protein sequence, read N- to C-terminus: Small ribosomal subunit protein uS10 (102 aa).

Belongs to the universal ribosomal protein uS10 family. As to quaternary structure, part of the 30S ribosomal subunit.

In terms of biological role, involved in the binding of tRNA to the ribosomes. This is Small ribosomal subunit protein uS10 from Clostridium botulinum (strain ATCC 19397 / Type A).